A 249-amino-acid polypeptide reads, in one-letter code: Large ribosomal subunit protein uL30A (249 aa).

Belongs to the universal ribosomal protein uL30 family. In terms of assembly, component of the small ribosomal subunit (SSU). Mature yeast ribosomes consist of a small (40S) and a large (60S) subunit. The 40S small subunit contains 1 molecule of ribosomal RNA (18S rRNA) and at least 33 different proteins. The large 60S subunit contains 3 rRNA molecules (25S, 5.8S and 5S rRNA) and at least 46 different proteins.

Its subcellular location is the cytoplasm. The protein localises to the nucleus. It is found in the nucleolus. Its function is as follows. Component of the ribosome, a large ribonucleoprotein complex responsible for the synthesis of proteins in the cell. The small ribosomal subunit (SSU) binds messenger RNAs (mRNAs) and translates the encoded message by selecting cognate aminoacyl-transfer RNA (tRNA) molecules. The large subunit (LSU) contains the ribosomal catalytic site termed the peptidyl transferase center (PTC), which catalyzes the formation of peptide bonds, thereby polymerizing the amino acids delivered by tRNAs into a polypeptide chain. The nascent polypeptides leave the ribosome through a tunnel in the LSU and interact with protein factors that function in enzymatic processing, targeting, and the membrane insertion of nascent chains at the exit of the ribosomal tunnel. The chain is Large ribosomal subunit protein uL30A (rlp7) from Schizosaccharomyces pombe (strain 972 / ATCC 24843) (Fission yeast).